Reading from the N-terminus, the 195-residue chain is Probable GTP-binding protein EngB (195 aa).

The EngB-type G domain occupies 22-194 (LKGEVAFVGR…LDLISTLLKE (173 aa)). GTP-binding positions include 30-37 (GRSNVGKS), 56-60 (GKTRS), 74-77 (DLPG), 141-144 (TKMD), and 173-175 (TSS). 2 residues coordinate Mg(2+): Ser37 and Thr58.

It belongs to the TRAFAC class TrmE-Era-EngA-EngB-Septin-like GTPase superfamily. EngB GTPase family. Mg(2+) serves as cofactor.

Necessary for normal cell division and for the maintenance of normal septation. This Thermotoga maritima (strain ATCC 43589 / DSM 3109 / JCM 10099 / NBRC 100826 / MSB8) protein is Probable GTP-binding protein EngB.